Reading from the N-terminus, the 234-residue chain is Uridylate kinase (234 aa).

ATP is bound at residue 10-11 (GS). Position 44 (Gly44) interacts with UMP. ATP-binding residues include Gly45 and Arg49. Residues Asp66 and 114–120 (ITPGQTT) contribute to the UMP site. The ATP site is built by Thr140, Tyr146, and Asp149.

The protein belongs to the UMP kinase family. As to quaternary structure, homohexamer.

It localises to the cytoplasm. It carries out the reaction UMP + ATP = UDP + ADP. It participates in pyrimidine metabolism; CTP biosynthesis via de novo pathway; UDP from UMP (UMPK route): step 1/1. Inhibited by UTP. Catalyzes the reversible phosphorylation of UMP to UDP. This chain is Uridylate kinase, found in Methanoregula boonei (strain DSM 21154 / JCM 14090 / 6A8).